The chain runs to 222 residues: Protein Thf1 (222 aa).

Residues 169–208 (IEKVKRDLELYRSNLDKINQARSLMKELVEQERKRRAQQT) adopt a coiled-coil conformation. The tract at residues 197-222 (VEQERKRRAQQTSAPPAVDASSDAPA) is disordered. The span at 209–222 (SAPPAVDASSDAPA) shows a compositional bias: low complexity.

This sequence belongs to the THF1 family.

May be involved in photosynthetic membrane biogenesis. This is Protein Thf1 from Thermosynechococcus vestitus (strain NIES-2133 / IAM M-273 / BP-1).